Reading from the N-terminus, the 514-residue chain is 2,3-bisphosphoglycerate-independent phosphoglycerate mutase (514 aa).

Positions 13 and 63 each coordinate Mn(2+). Ser63 serves as the catalytic Phosphoserine intermediate. Substrate is bound by residues His124, 154–155 (RD), Arg186, Arg192, 258–261 (RADR), and Lys332. The Mn(2+) site is built by Asp399, His403, Asp440, His441, and His459.

It belongs to the BPG-independent phosphoglycerate mutase family. Monomer. Mn(2+) is required as a cofactor.

The enzyme catalyses (2R)-2-phosphoglycerate = (2R)-3-phosphoglycerate. It participates in carbohydrate degradation; glycolysis; pyruvate from D-glyceraldehyde 3-phosphate: step 3/5. In terms of biological role, catalyzes the interconversion of 2-phosphoglycerate and 3-phosphoglycerate. The polypeptide is 2,3-bisphosphoglycerate-independent phosphoglycerate mutase (Legionella pneumophila (strain Lens)).